We begin with the raw amino-acid sequence, 101 residues long: Small ribosomal subunit protein uS14 (101 aa).

The disordered stretch occupies residues 1–20; the sequence is MAKISAVERNKKRERLTKRD.

It belongs to the universal ribosomal protein uS14 family. In terms of assembly, part of the 30S ribosomal subunit. Contacts proteins S3 and S10.

In terms of biological role, binds 16S rRNA, required for the assembly of 30S particles and may also be responsible for determining the conformation of the 16S rRNA at the A site. In Rhodospirillum rubrum (strain ATCC 11170 / ATH 1.1.1 / DSM 467 / LMG 4362 / NCIMB 8255 / S1), this protein is Small ribosomal subunit protein uS14.